A 296-amino-acid polypeptide reads, in one-letter code: Probable porphobilinogen deaminase (296 aa).

An S-(dipyrrolylmethanemethyl)cysteine modification is found at cysteine 241.

Belongs to the HMBS family. The cofactor is dipyrromethane.

The enzyme catalyses 4 porphobilinogen + H2O = hydroxymethylbilane + 4 NH4(+). The protein operates within porphyrin-containing compound metabolism; protoporphyrin-IX biosynthesis; coproporphyrinogen-III from 5-aminolevulinate: step 2/4. Tetrapolymerization of the monopyrrole PBG into the hydroxymethylbilane pre-uroporphyrinogen in several discrete steps. This Pyrobaculum calidifontis (strain DSM 21063 / JCM 11548 / VA1) protein is Probable porphobilinogen deaminase.